Reading from the N-terminus, the 329-residue chain is Secretory carrier-associated membrane protein 2 (329 aa).

2 disordered regions span residues 1–21 (MSAFDTNPFADPVDVNPFQDP) and 51–72 (VTQLPGSSQPAVLQPSVEPTQP). Residues 1 to 153 (MSAFDTNPFA…DYQRICKMLY (153 aa)) are Cytoplasmic-facing. Residues 154-174 (YLWMLHSVTLFLNLLACLAWF) traverse the membrane as a helical segment. Residues 175 to 181 (SGNSSKG) lie on the Lumenal side of the membrane. The helical transmembrane segment at 182 to 202 (VDFGLSILWFLIFTPCAFLCW) threads the bilayer. Over 203–218 (YRPIYKAFRSDNSFSF) the chain is Cytoplasmic. The segment at 203–218 (YRPIYKAFRSDNSFSF) is interaction with SLC9A7. A helical membrane pass occupies residues 219–239 (FVFFFVFFCQIGIYIIQLVGI). Topologically, residues 240–262 (PGLGDSGWIAALSTLDNHSLAIS) are lumenal. The chain crosses the membrane as a helical span at residues 263–283 (VIMMVVAGFFTLCAVLSVFLL). Residues 284 to 329 (QRVHSLYRRTGASFQQAQEEFSQGIFSSRTFHRAASSAAQGAFQGN) are Cytoplasmic-facing. Phosphoserine is present on residues Ser-319 and Ser-320.

It belongs to the SCAMP family. In terms of assembly, interacts with SLC6A4 and SLC9A7. Interacts with SLC9A5; this interaction regulates SLC9A5 cell-surface targeting and SLC9A5 activity. Widely expressed.

It localises to the golgi apparatus. The protein resides in the trans-Golgi network membrane. It is found in the recycling endosome membrane. Its function is as follows. Functions in post-Golgi recycling pathways. Acts as a recycling carrier to the cell surface. This chain is Secretory carrier-associated membrane protein 2 (SCAMP2), found in Homo sapiens (Human).